The following is a 204-amino-acid chain: INSIG protein homolog (204 aa).

5 consecutive transmembrane segments (helical) span residues 5-27, 47-64, 76-97, 101-118, and 124-145; these read ISEA…HSHV, FWFP…AELR, ARQA…ALVH, VVPV…TWCV, and GAAC…LVQL. An a 1,2-diacyl-sn-glycerol-binding site is contributed by histidine 26. Tyrosine 150 lines the a 1,2-diacyl-sn-glycerol pocket. A helical transmembrane segment spans residues 162–179; it reads PFLAPLYFAFGVVAALLG.

It belongs to the INSIG family. Homotrimer.

It is found in the membrane. In terms of biological role, diacylglycerol-binding protein. This Mycolicibacterium vanbaalenii (strain DSM 7251 / JCM 13017 / BCRC 16820 / KCTC 9966 / NRRL B-24157 / PYR-1) (Mycobacterium vanbaalenii) protein is INSIG protein homolog.